A 1349-amino-acid chain; its full sequence is Serine/threonine-protein kinase GIN4 (1349 aa).

Residues 1–20 show a composition bias toward low complexity; it reads MPHSRQPSISSSIMSQSNHN. Residues 1 to 30 are disordered; it reads MPHSRQPSISSSIMSQSNHNHPQKIGPWKL. A phosphoserine mark is found at Ser10, Ser11, Ser12, and Ser15. The region spanning 28-288 is the Protein kinase domain; that stretch reads WKLGKTLGRG…TEKILRHPLL (261 aa). ATP contacts are provided by residues 34–42 and Lys57; that span reads LGRGATGRV. Phosphothreonine is present on Thr69. The active-site Proton acceptor is Asp158. Position 191 is a phosphothreonine (Thr191). 3 positions are modified to phosphoserine: Ser294, Ser300, and Ser303. 2 disordered regions span residues 366-498 and 510-532; these read QEDN…KAKP and SNFSLPPSLPPSLPSKDSRYMID. Positions 369–384 are enriched in low complexity; the sequence is NTNNNSPKKSTSFNNK. A phosphoserine mark is found at Ser388, Ser390, and Ser393. Thr397 is modified (phosphothreonine). Composition is skewed to polar residues over residues 406 to 418 and 426 to 442; these read ISVSRPTSFQYKS and ANRNSVARHSVASSANN. 2 positions are modified to phosphoserine: Ser407 and Ser409. Thr412 bears the Phosphothreonine mark. Ser413 bears the Phosphoserine mark. Over residues 443-470 the composition is skewed to low complexity; the sequence is SPRKSPYKSPYRSPYRSPYKSPSKRYSY. Phosphoserine occurs at positions 455, 469, 473, 477, and 485. Over residues 471-488 the composition is skewed to polar residues; the sequence is NQSPTKSPYGRRSNSQRQ. Ser556 bears the Phosphoserine mark. Residues 570–585 are compositionally biased toward low complexity; sequence RNSIIGKNNNNSNSNK. The segment at 570–593 is disordered; the sequence is RNSIIGKNNNNSNSNKRMSKRKSI. Ser634 bears the Phosphoserine mark. The stretch at 661 to 701 forms a coiled coil; sequence EEKEAKEYERLMELERKKHEAELKARRELEKKKRRQKRRSI. The segment at 712 to 737 is disordered; it reads KNDADPNNSEQELVDEGIKQPKRQSK. A phosphoserine mark is found at Ser720 and Ser746. The disordered stretch occupies residues 756–798; the sequence is TLEDVENLKRRSASQPVPKRRQTPVLTRRPVSRLDPLWQAHEN. Phosphothreonine occurs at positions 778, 869, and 876. Ser891 carries the post-translational modification Phosphoserine. The residue at position 941 (Thr941) is a Phosphothreonine. Residue Ser973 is modified to Phosphoserine. Residues Thr990 and Thr992 each carry the phosphothreonine modification. A Phosphoserine modification is found at Ser999. The disordered stretch occupies residues 1011 to 1229; the sequence is RTSYYDGSGK…AESKEEKPKS (219 aa). Positions 1024–1040 are enriched in polar residues; the sequence is RASTTKRYNVHSSSGQR. Positions 1044–1053 are enriched in basic and acidic residues; it reads KVPDLPKNDY. At Thr1056 the chain carries Phosphothreonine. Phosphoserine occurs at positions 1059, 1074, 1077, 1078, 1080, and 1094. The segment covering 1083–1094 has biased composition (basic and acidic residues); it reads VFDKIKLPDGKS. Position 1095 is a phosphothreonine (Thr1095). Phosphoserine is present on residues Ser1097 and Ser1098. Residue Thr1106 is modified to Phosphothreonine. The span at 1134–1149 shows a compositional bias: polar residues; it reads IESSQPMSKVRGNNSS. Phosphoserine is present on Ser1154. Positions 1202–1215 are enriched in low complexity; sequence NNTNAATNTTTQQQ. Ser1218 carries the phosphoserine modification.

The protein belongs to the protein kinase superfamily. CAMK Ser/Thr protein kinase family. NIM1 subfamily. In terms of assembly, associates with the septin complex which consists of CDC3, CDC10, CDC11, CDC12, and SEP7. Post-translationally, hyperphosphorylated during mitosis at dozens of sites. Among these, 7 have perfect or minimal CDK consensus sites and are CDC28 targets.

Its subcellular location is the cytoplasm. The protein localises to the bud neck. It catalyses the reaction L-seryl-[protein] + ATP = O-phospho-L-seryl-[protein] + ADP + H(+). The catalysed reaction is L-threonyl-[protein] + ATP = O-phospho-L-threonyl-[protein] + ADP + H(+). Functionally, serine/threonine-protein kinase which regulates the localization and the function of the septins during mitosis. Involved in the formation of the septin ring but not the basal septin band. Phosphorylates septins CDC11 and SEP7. Required for the transition from pseudohyphae to hyphae. Acts upstream of IRS4 and INP51 in regulating cell wall integrity responses. Involved in propolis-induced cell death. The protein is Serine/threonine-protein kinase GIN4 (GIN4) of Candida albicans (strain SC5314 / ATCC MYA-2876) (Yeast).